The primary structure comprises 74 residues: Cyclin-dependent kinases regulatory subunit (74 aa).

Belongs to the CKS family. In terms of assembly, forms a homohexamer that can probably bind six kinase subunits.

In terms of biological role, binds to the catalytic subunit of the cyclin dependent kinases Cdk1 and Cdk2, and is essential for their biological function. This Drosophila melanogaster (Fruit fly) protein is Cyclin-dependent kinases regulatory subunit (Cks30A).